The following is a 207-amino-acid chain: Ribosomal RNA large subunit methyltransferase E (207 aa).

5 residues coordinate S-adenosyl-L-methionine: Gly-60, Trp-62, Asp-80, Asp-96, and Asp-121. Lys-161 functions as the Proton acceptor in the catalytic mechanism.

It belongs to the class I-like SAM-binding methyltransferase superfamily. RNA methyltransferase RlmE family.

The protein resides in the cytoplasm. The enzyme catalyses uridine(2552) in 23S rRNA + S-adenosyl-L-methionine = 2'-O-methyluridine(2552) in 23S rRNA + S-adenosyl-L-homocysteine + H(+). Its function is as follows. Specifically methylates the uridine in position 2552 of 23S rRNA at the 2'-O position of the ribose in the fully assembled 50S ribosomal subunit. The sequence is that of Ribosomal RNA large subunit methyltransferase E from Pseudomonas aeruginosa (strain UCBPP-PA14).